The sequence spans 261 residues: Ribonuclease HII (261 aa).

The region spanning 72–260 is the RNase H type-2 domain; it reads AVICGIDEVG…IKSIVLEKLD (189 aa). The a divalent metal cation site is built by aspartate 78, glutamate 79, and aspartate 170.

This sequence belongs to the RNase HII family. Mn(2+) serves as cofactor. Requires Mg(2+) as cofactor.

The protein resides in the cytoplasm. The enzyme catalyses Endonucleolytic cleavage to 5'-phosphomonoester.. Functionally, endonuclease that specifically degrades the RNA of RNA-DNA hybrids. The sequence is that of Ribonuclease HII from Staphylococcus carnosus (strain TM300).